The primary structure comprises 526 residues: Peptide chain release factor 3 (526 aa).

The tr-type G domain maps to 9-277 (DKRRTFAIIS…GIVEWAPKPL (269 aa)). GTP contacts are provided by residues 18–25 (SHPDAGKT), 86–90 (DTPGH), and 140–143 (NKLD).

It belongs to the TRAFAC class translation factor GTPase superfamily. Classic translation factor GTPase family. PrfC subfamily.

Its subcellular location is the cytoplasm. Functionally, increases the formation of ribosomal termination complexes and stimulates activities of RF-1 and RF-2. It binds guanine nucleotides and has strong preference for UGA stop codons. It may interact directly with the ribosome. The stimulation of RF-1 and RF-2 is significantly reduced by GTP and GDP, but not by GMP. This Shewanella sp. (strain ANA-3) protein is Peptide chain release factor 3.